Consider the following 925-residue polypeptide: Probable disease resistance protein At1g61310 (925 aa).

The stretch at 25–69 (GKSYIRTLEKNLRALQREMEDLRATQHEVQNKVAREESRHQQRLE) forms a coiled coil. Residues 134 to 154 (NFDEVSQPPPRSEVEERPTQP) form a disordered region. An NB-ARC domain is found at 139-442 (SQPPPRSEVE…CEGFIGEDQV (304 aa)). 181–188 (GMGGVGKT) lines the ATP pocket. LRR repeat units lie at residues 525-546 (AVRRMSLMRNEIEEITCESKCS), 547-568 (ELTTLFLQSNQLKNLSGEFIRY), 571-594 (KLVVLDLSDNRDFNELPEQISGLV), 595-617 (SLQYLDLSFTRIEQLPVGLKELK), 618-640 (KLTFLDLAYTARLCSISGISRLL), and 641-663 (SLRVLSLLGSKVHGDASVLKELQ).

Belongs to the disease resistance NB-LRR family.

In terms of biological role, probable disease resistance protein. This is Probable disease resistance protein At1g61310 from Arabidopsis thaliana (Mouse-ear cress).